Reading from the N-terminus, the 439-residue chain is Enolase (439 aa).

Gln-163 contacts (2R)-2-phosphoglycerate. Glu-205 (proton donor) is an active-site residue. 3 residues coordinate Mg(2+): Asp-242, Glu-287, and Asp-314. Residues Lys-339, Arg-368, Ser-369, and Lys-390 each contribute to the (2R)-2-phosphoglycerate site. The active-site Proton acceptor is Lys-339.

The protein belongs to the enolase family. Requires Mg(2+) as cofactor.

The protein resides in the cytoplasm. The protein localises to the secreted. It is found in the cell surface. The enzyme catalyses (2R)-2-phosphoglycerate = phosphoenolpyruvate + H2O. The protein operates within carbohydrate degradation; glycolysis; pyruvate from D-glyceraldehyde 3-phosphate: step 4/5. In terms of biological role, catalyzes the reversible conversion of 2-phosphoglycerate (2-PG) into phosphoenolpyruvate (PEP). It is essential for the degradation of carbohydrates via glycolysis. The polypeptide is Enolase (Levilactobacillus brevis (strain ATCC 367 / BCRC 12310 / CIP 105137 / JCM 1170 / LMG 11437 / NCIMB 947 / NCTC 947) (Lactobacillus brevis)).